The chain runs to 48 residues: Large ribosomal subunit protein bL33A (48 aa).

It belongs to the bacterial ribosomal protein bL33 family.

The polypeptide is Large ribosomal subunit protein bL33A (Exiguobacterium sibiricum (strain DSM 17290 / CCUG 55495 / CIP 109462 / JCM 13490 / 255-15)).